The chain runs to 62 residues: Delta-theraphotoxin-Cg1a 1 (62 aa).

A signal peptide spans 1 to 21 (MKTSILFVIFSLALLFALSAA). A propeptide spanning residues 22–29 (TEIEETDR) is cleaved from the precursor. 3 disulfide bridges follow: Cys31–Cys46, Cys38–Cys51, and Cys45–Cys58.

The protein belongs to the neurotoxin 10 (Hwtx-1) family. 33 (Jztx-1) subfamily. As to expression, expressed by the venom gland.

The protein resides in the secreted. Inhibits voltage-gated sodium channels, preferentially subtype Nav1.5/SCN5A (in cardiac myocytes), but also Nav1.6/SCN8A and Nav1.7/SCN9A (TTX-sensitive Nav in rat DRG neurons) and invertebrate Nav (in insect neurons) as well as voltage-gated potassium channels of the subtype Kv2.1/KCNB1. Is suggested to bind to site 3 of the sodium channels and inhibit the inactivation of the activated channels, thereby blocking neuronal transmission. On potassium channels, inhibits activation of channels with an IC(50) of 8.05 uM through a voltage sensor-trapping mechanism. Increases muscle contraction in several assays (mouse phrenic nerve-diaphragm, toad heart, rat vas deferens) and is suggested to act both presynaptically and postsynaptically. Functionally, moderately inhibits voltage-gated sodium channels and weakly inhibits voltage-gated potassium channel. Inhibits the inactivation of rat Nav1.2/SCN2A (IC(50)=870 nM), rat Nav1.3/SCN3A (IC(50)=845 nM), rat Nav1.4/SCN4A (IC(50)=339 nM), human Nav1.5/SCN5A (IC(50)=335 nM) and human Nav1.7/SCN9A sodium channels (IC(50)=348 nM). The toxin delays the inactivation of sodium channels without affecting the activation and steady-state inactivation kinetics in the physiological range of voltages. Site-directed mutagenesis of the sodium channel indicates that the toxin interacts with site 3 located at the extracellular S3-S4 linker of domain IV. On potassium channels, it inhibits activation of channels with an IC(50) of 8.05 uM through a voltage sensor-trapping mechanism. It increases muscle contraction in several assays (mouse phrenic nerve-diaphragm, toad heart, rat vas deferens) and is suggested to act both presynaptically and postsynaptically. In Chilobrachys guangxiensis (Chinese earth tiger tarantula), this protein is Delta-theraphotoxin-Cg1a 1.